A 492-amino-acid polypeptide reads, in one-letter code: MNKSSTKTLIALSMMAVSSGVSAHGYVSETNDGIAGSRAALCKFPTSDTQEKNRDCGAVQWEPQSVEGPEGFPEKGPADGQIAGAGLVQFSELNEQTADRWVKRPITAGAQTFEWTFTANHVTRTWKYYMTKQNWNPNAVLTRDSFDLTPFCELEYNMEKPPLYPNTFSHECIVPEREGYQVILAVWDVGDTAAAFYNVIDVKFDGNGGVVDPTWSQGGQINPTRDLNVGERVFTRVFDASGENVSLSTELVIENETQGQANNWTHALATKINKEQQNIGAGQLNDKGEFSPQYGPNPVYLKAGSGLKSVEIGYQLETVEPVYHLDIEGLASEYTIGDSATELDLSLYATGDMNVELTVYNHGKEALANTNVTLKDGDAKSVVMALSKSEKGHHMLVSRIKNMDGELIKQDMSDFHLVEEAVTPPPSGDFDFVFPEGVKDYKAGTKVLAEDSNVYQCKEFPYSGYCVQWTETATNFAPGVGSDWSMAWDKVN.

The signal sequence occupies residues 1 to 23 (MNKSSTKTLIALSMMAVSSGVSA). The Chitin-binding type-4 domain occupies 24-204 (HGYVSETNDG…AFYNVIDVKF (181 aa)). The Chitin-binding type-3 domain maps to 443–484 (AGTKVLAEDSNVYQCKEFPYSGYCVQWTETATNFAPGVGSDW).

The protein belongs to the GbpA family.

Its subcellular location is the secreted. In terms of biological role, probably interacts with GlcNAc residues. May promote attachment to both epithelial cell surfaces and chitin. This is GlcNAc-binding protein A from Aliivibrio fischeri (strain MJ11) (Vibrio fischeri).